Here is a 569-residue protein sequence, read N- to C-terminus: Protein germ cell-less (569 aa).

A disordered region spans residues 17-43; that stretch reads SNRRKRKRSTDSSLGKDDPAQLDTTQP. In terms of domain architecture, BTB spans 66 to 136; sequence SDVAVMALDK…MYSDEIEIES (71 aa). Positions 517–553 are disordered; sequence GANSDRPLSPSSADDSAVFIGDSEPSTPSSPAPRPRI.

The protein resides in the cytoplasm. In terms of biological role, required for the specification of pole cells and germ cell formation. Mothers with reduced glc function give rise to sterile adult progeny that lack germ cells. This chain is Protein germ cell-less (gcl), found in Drosophila melanogaster (Fruit fly).